The chain runs to 281 residues: 2,3,4,5-tetrahydropyridine-2,6-dicarboxylate N-succinyltransferase (281 aa).

The substrate site is built by R108 and D145.

Belongs to the transferase hexapeptide repeat family. As to quaternary structure, homotrimer.

The protein resides in the cytoplasm. The enzyme catalyses (S)-2,3,4,5-tetrahydrodipicolinate + succinyl-CoA + H2O = (S)-2-succinylamino-6-oxoheptanedioate + CoA. Its pathway is amino-acid biosynthesis; L-lysine biosynthesis via DAP pathway; LL-2,6-diaminopimelate from (S)-tetrahydrodipicolinate (succinylase route): step 1/3. The polypeptide is 2,3,4,5-tetrahydropyridine-2,6-dicarboxylate N-succinyltransferase (Methylobacterium nodulans (strain LMG 21967 / CNCM I-2342 / ORS 2060)).